A 108-amino-acid chain; its full sequence is Nucleoid-associated protein BAV0915 (108 aa).

This sequence belongs to the YbaB/EbfC family. Homodimer.

The protein resides in the cytoplasm. It is found in the nucleoid. Its function is as follows. Binds to DNA and alters its conformation. May be involved in regulation of gene expression, nucleoid organization and DNA protection. The protein is Nucleoid-associated protein BAV0915 of Bordetella avium (strain 197N).